A 559-amino-acid polypeptide reads, in one-letter code: Acetolactate synthase, catabolic (559 aa).

FAD contacts are provided by residues Arg-159, 263–284 (FNNQ…IGYS), and 304–323 (DVLP…LVGD). Residue Asp-447 coordinates Mg(2+).

Belongs to the TPP enzyme family. As to quaternary structure, homodimer.

It catalyses the reaction 2 pyruvate + H(+) = (2S)-2-acetolactate + CO2. The protein operates within polyol metabolism; (R,R)-butane-2,3-diol biosynthesis; (R,R)-butane-2,3-diol from pyruvate: step 1/3. This is Acetolactate synthase, catabolic (budB) from Raoultella terrigena (Klebsiella terrigena).